The chain runs to 380 residues: Alcohol dehydrogenase 2 (380 aa).

Zn(2+) contacts are provided by C48, T50, H70, C100, C103, C106, C114, and C178. An alcohol is bound by residues T50 and H70. An NAD(+)-binding site is contributed by T50. Residues 203-208 (GLGAVG), D227, R232, T273, V296, 296-298 (VGV), F323, and R373 contribute to the NAD(+) site.

The protein belongs to the zinc-containing alcohol dehydrogenase family. In terms of assembly, homodimer. Homotetramer. Zn(2+) is required as a cofactor.

It is found in the cytoplasm. It carries out the reaction a primary alcohol + NAD(+) = an aldehyde + NADH + H(+). The catalysed reaction is a secondary alcohol + NAD(+) = a ketone + NADH + H(+). This chain is Alcohol dehydrogenase 2 (ADH2), found in Solanum lycopersicum (Tomato).